Here is a 103-residue protein sequence, read N- to C-terminus: Hexon-interlacing protein (103 aa).

The interval 25-45 (RQNVTGSDLGGKPVPSDVLES) is disordered. A coiled-coil region spans residues 72 to 99 (LDDLKTQVAAMQNSVTAIQEELKDLKQR).

The protein belongs to the adenoviridae hexon-interlacing protein family. Homotrimer. Interacts with hexon protein; this interaction tethers the hexons together. Self-interacts with adjacent proteins. Interacts with kinesin light chain KLC1; this interaction leads to capsid disruption at the nuclear pore complex during virus entry into host cell.

It is found in the virion. It localises to the host nucleus. In terms of biological role, structural component of the virion that acts as a cement protein on the capsid exterior and forms triskelion structures consisting of three molecules that stabilize three hexon trimers at the center of each icosahedral facet and fixes the peripentonal hexons. Dispensable for assembly. During virus entry, recruits the anterograde motor kinesin-1 to the capsid docked at the nuclear pore complex thereby subjecting the docked capsid to a pulling force. The resulting tension leads to capsid disruption, dispersion of capsid fragments toward cell periphery and eventually viral DNA entry into the host nucleus. This is Hexon-interlacing protein from Canine adenovirus serotype 1 (strain CLL) (CAdV-1).